Reading from the N-terminus, the 424-residue chain is UDP-N-acetylglucosamine 1-carboxyvinyltransferase (424 aa).

K22–N23 provides a ligand contact to phosphoenolpyruvate. Residue R93 participates in UDP-N-acetyl-alpha-D-glucosamine binding. The active-site Proton donor is C117. C117 carries the 2-(S-cysteinyl)pyruvic acid O-phosphothioketal modification. UDP-N-acetyl-alpha-D-glucosamine-binding positions include R122–L126, K162–V165, D307, and I329.

The protein belongs to the EPSP synthase family. MurA subfamily.

The protein localises to the cytoplasm. It carries out the reaction phosphoenolpyruvate + UDP-N-acetyl-alpha-D-glucosamine = UDP-N-acetyl-3-O-(1-carboxyvinyl)-alpha-D-glucosamine + phosphate. It functions in the pathway cell wall biogenesis; peptidoglycan biosynthesis. Functionally, cell wall formation. Adds enolpyruvyl to UDP-N-acetylglucosamine. The sequence is that of UDP-N-acetylglucosamine 1-carboxyvinyltransferase from Haemophilus influenzae (strain 86-028NP).